We begin with the raw amino-acid sequence, 685 residues long: Kinesin-related protein 11 (685 aa).

The Kinesin motor domain maps to 4 to 405 (NISVSVRARP…LKFASRAKKI (402 aa)). Residues 36 to 105 (TSLPPPITQP…TTVPASPAPT (70 aa)) are disordered. The segment covering 47–105 (SSLPPISTPIKSSSSSSTSTSAGSLKTPLKTPLKTPLKTPLKTNSTTTNTTVPASPAPT) has biased composition (low complexity). 156–163 (GITSSGKT) contributes to the ATP binding site. Residues 411–488 (VNEILDDKAL…KINNLNKLIL (78 aa)) are a coiled coil. The segment at 495–568 (NSASKGGSGS…QSTSSLTIGG (74 aa)) is disordered. Residues 511-520 (RSTFVSPSQN) are compositionally biased toward polar residues. Over residues 533-565 (PNSFSNLLLQSPSQNNNNNSHISPLSQSTSSLT) the composition is skewed to low complexity. Residues 574–683 (FESNELIQIQ…LKSKIQEYEV (110 aa)) are a coiled coil.

The protein belongs to the TRAFAC class myosin-kinesin ATPase superfamily. Kinesin family.

It is found in the cytoplasm. The protein resides in the cytoskeleton. Functionally, microtubule-associated force-producing protein that plays a role in organelle transport. Its motor activity is directed toward the microtubule's plus end. The chain is Kinesin-related protein 11 (kif11) from Dictyostelium discoideum (Social amoeba).